A 428-amino-acid chain; its full sequence is Dihydroorotase (428 aa).

Residues His-59 and His-61 each contribute to the Zn(2+) site. Substrate-binding positions include 61–63 (HLR) and Asn-93. Zn(2+) is bound by residues Asp-151, His-178, and His-231. Asn-277 contributes to the substrate binding site. Asp-304 is a binding site for Zn(2+). Asp-304 is a catalytic residue. Substrate-binding positions include His-308 and 322 to 323 (FG).

This sequence belongs to the metallo-dependent hydrolases superfamily. DHOase family. Class I DHOase subfamily. Zn(2+) is required as a cofactor.

The catalysed reaction is (S)-dihydroorotate + H2O = N-carbamoyl-L-aspartate + H(+). It participates in pyrimidine metabolism; UMP biosynthesis via de novo pathway; (S)-dihydroorotate from bicarbonate: step 3/3. Functionally, catalyzes the reversible cyclization of carbamoyl aspartate to dihydroorotate. The chain is Dihydroorotase from Bacillus cereus (strain G9842).